A 380-amino-acid chain; its full sequence is MYG1 exonuclease (380 aa).

The transit peptide at 1 to 46 (MGRRFLRGILTLPLRSVLQAQHRMLGSEQDPPAKRPRNNLMAPPRI) directs the protein to the mitochondrion. N6-acetyllysine occurs at positions 266 and 272.

It belongs to the MYG1 family. In terms of tissue distribution, ubiquitously expressed, with highest levels in testis.

The protein resides in the nucleus. The protein localises to the nucleoplasm. Its subcellular location is the mitochondrion matrix. It is found in the nucleolus. In terms of biological role, 3'-5' RNA exonuclease which cleaves in situ on specific transcripts in both nucleus and mitochondrion. Involved in regulating spatially segregated organellar RNA processing, acts as a coordinator of nucleo-mitochondrial crosstalk. In nucleolus, processes pre-ribosomal RNA involved in ribosome assembly and alters cytoplasmic translation. In mitochondrial matrix, processes 3'-termini of the mito-ribosomal and messenger RNAs and controls translation of mitochondrial proteins. The polypeptide is MYG1 exonuclease (Mus musculus (Mouse)).